Here is a 755-residue protein sequence, read N- to C-terminus: SWI/SNF-related matrix-associated actin-dependent regulator of chromatin subfamily A-like protein 1 (755 aa).

Residues 7–27 (SEIAEKKRIALAKLQAKKSQL) adopt a coiled-coil conformation. Disordered regions lie at residues 26-91 (QLLA…NKSS) and 104-134 (SNRE…SLSS). A compositionally biased stretch (polar residues) spans 32 to 63 (PATNGKSTTSATGATQHANNGKSNPNQPQAKS). Serine 63 carries the post-translational modification Phosphoserine. Residues 139–217 (PVAVLLGNSI…KPYVHMNGIP (79 aa)) enclose the HARP domain. Positions 256–412 (CFAIAQKGRI…FTQLQMIDGK (157 aa)) constitute a Helicase ATP-binding domain. 269 to 276 (DEMGLGKT) contributes to the ATP binding site. A DESH box motif is present at residues 361 to 364 (DESH). Residues 527-681 (YLKTLVKEQK…NLQKATHTAA (155 aa)) enclose the Helicase C-terminal domain.

Belongs to the SNF2/RAD54 helicase family. SMARCAL1 subfamily.

The protein resides in the nucleus. ATP-dependent annealing helicase that catalyzes the rewinding of the stably unwound DNA. The sequence is that of SWI/SNF-related matrix-associated actin-dependent regulator of chromatin subfamily A-like protein 1 (Marcal1) from Drosophila melanogaster (Fruit fly).